We begin with the raw amino-acid sequence, 318 residues long: Type II methyltransferase M.HaeII (318 aa).

Residues 4-304 (YKTIDLFAGI…GSMINSLNMA (301 aa)) form the SAM-dependent MTase C5-type domain. Residue cysteine 73 is part of the active site.

Belongs to the class I-like SAM-binding methyltransferase superfamily. C5-methyltransferase family.

It carries out the reaction a 2'-deoxycytidine in DNA + S-adenosyl-L-methionine = a 5-methyl-2'-deoxycytidine in DNA + S-adenosyl-L-homocysteine + H(+). Its function is as follows. A methylase, recognizes the double-stranded sequence 5'-RGCGCY-3', methylates C-? on both strands, and protects the DNA from cleavage by the HaeII endonuclease. The sequence is that of Type II methyltransferase M.HaeII (haeIIM) from Haemophilus aegyptius.